Reading from the N-terminus, the 360-residue chain is E3 ubiquitin-protein ligase HAKAI homolog (360 aa).

The span at 1–11 shows a compositional bias: basic and acidic residues; the sequence is MLQIRLRRDSP. Residues 1–24 form a disordered region; the sequence is MLQIRLRRDSPTETGNGARPSPTE. An RING-type zinc finger spans residues 72–107; that stretch reads CVRCDFPIAIYGRLIPCDHAFCLECARSDSICYLCD. Residues 123–148 form a C2H2-type zinc finger; it reads FICAAPHCLRSFLKKLDFEAHVHDLH. Residues 156 to 360 are disordered; it reads AEKEDGNQSD…QENRDGFGQE (205 aa). 3 stretches are compositionally biased toward polar residues: residues 163–179, 186–214, and 270–283; these read QSDV…SEST, SQLQ…QNYP, and YPTT…QFFN. The segment covering 293 to 304 has biased composition (low complexity); it reads ESGGSEQSSLLG.

It belongs to the Hakai family. As to quaternary structure, interacts with MTB and VIR. Associates with MTA, MTB, FIP37 and VIR to form the m6A writer complex which is essential for adenosine methylation at specific mRNA sequences.

It is found in the nucleus speckle. The protein localises to the nucleus. The protein resides in the nucleoplasm. It catalyses the reaction S-ubiquitinyl-[E2 ubiquitin-conjugating enzyme]-L-cysteine + [acceptor protein]-L-lysine = [E2 ubiquitin-conjugating enzyme]-L-cysteine + N(6)-ubiquitinyl-[acceptor protein]-L-lysine.. Probable E3 ubiquitin-protein ligase which is a subunit of the N6-methyltransferase complex, a multiprotein complex that mediates N6-methyladenosine (m6A) methylation at the 5'-[AG]GAC-3' consensus sites of some mRNAs. Associates with MTA, MTB, FIP37 and VIR to form the m6A writer complex which is essential for adenosine methylation at specific mRNA sequences. N6-methyladenosine (m6A) plays a role in mRNA stability, processing, translation efficiency and editing. The chain is E3 ubiquitin-protein ligase HAKAI homolog from Arabidopsis thaliana (Mouse-ear cress).